The primary structure comprises 328 residues: Alanine racemase (328 aa).

Catalysis depends on K33, which acts as the Proton acceptor; specific for D-alanine. The residue at position 33 (K33) is an N6-(pyridoxal phosphate)lysine. Residue R118 coordinates substrate. The Proton acceptor; specific for L-alanine role is filled by Y237. M283 lines the substrate pocket.

It belongs to the alanine racemase family. The cofactor is pyridoxal 5'-phosphate.

It carries out the reaction L-alanine = D-alanine. It functions in the pathway amino-acid biosynthesis; D-alanine biosynthesis; D-alanine from L-alanine: step 1/1. Its function is as follows. Catalyzes the interconversion of L-alanine and D-alanine. May also act on other amino acids. The sequence is that of Alanine racemase (alr) from Campylobacter jejuni subsp. doylei (strain ATCC BAA-1458 / RM4099 / 269.97).